The following is a 154-amino-acid chain: uncharacterized protein (154 aa).

Positions 91–154 (PSEESWGCRQ…WGSPQPSRGA (64 aa)) are disordered. Residues 134-154 (SRDTSPLGGQSWGSPQPSRGA) show a composition bias toward polar residues.

This is an uncharacterized protein from Homo sapiens (Human).